A 124-amino-acid polypeptide reads, in one-letter code: Cytochrome b5-like protein (124 aa).

A helical transmembrane segment spans residues 5-22 (YLLILIIIYVIKIICRYF). The 76-residue stretch at 49-124 (NQINQVNQVN…ILSKYKITEK (76 aa)) folds into the Cytochrome b5 heme-binding domain. Heme contacts are provided by H84 and H108.

This sequence belongs to the cytochrome b5 family.

Its subcellular location is the membrane. Functionally, membrane bound hemoprotein which function as an electron carrier for several membrane bound oxygenases. This Acanthamoeba polyphaga (Amoeba) protein is Cytochrome b5-like protein.